Here is a 332-residue protein sequence, read N- to C-terminus: uncharacterized protein (332 aa).

Positions 1 to 23 (MKRIPSLIIGLLLILATWHSVLA) are cleaved as a signal peptide. Residues 231–251 (SFFLGMIVTLIILAPVILYLW) traverse the membrane as a helical segment.

It is found in the membrane. This is an uncharacterized protein from Pyrococcus horikoshii (strain ATCC 700860 / DSM 12428 / JCM 9974 / NBRC 100139 / OT-3).